The sequence spans 313 residues: Porphobilinogen deaminase (313 aa).

At cysteine 242 the chain carries S-(dipyrrolylmethanemethyl)cysteine.

The protein belongs to the HMBS family. In terms of assembly, monomer. Dipyrromethane serves as cofactor.

The catalysed reaction is 4 porphobilinogen + H2O = hydroxymethylbilane + 4 NH4(+). Its pathway is porphyrin-containing compound metabolism; protoporphyrin-IX biosynthesis; coproporphyrinogen-III from 5-aminolevulinate: step 2/4. In terms of biological role, tetrapolymerization of the monopyrrole PBG into the hydroxymethylbilane pre-uroporphyrinogen in several discrete steps. The chain is Porphobilinogen deaminase from Pseudomonas entomophila (strain L48).